A 3099-amino-acid chain; its full sequence is Genome polyprotein (3099 aa).

Residues 180 to 322 (QRANADVDHL…ECSKDKIHQY (143 aa)) enclose the Peptidase S30 domain. Active-site for P1 proteinase activity residues include His-233, Glu-242, and Ser-275. The Involved in interaction with stylet and aphid transmission signature appears at 374–377 (KVSC). Positions 631 to 633 (PTK) match the Involved in virions binding and aphid transmission motif. One can recognise a Peptidase C6 domain in the interval 657–779 (MYVAKEGYCY…VSEMKHYVVG (123 aa)). Catalysis depends on for helper component proteinase activity residues Cys-665 and His-738. The region spanning 1252–1404 (NMRASNASEF…TQFDVALLIE (153 aa)) is the Helicase ATP-binding domain. 1265–1272 (GAVGSGKS) lines the ATP pocket. Residues 1354 to 1357 (DESH) carry the DESH box motif. In terms of domain architecture, Helicase C-terminal spans 1423–1582 (DMTKHGDNIL…GLPVITHNVT (160 aa)). The short motif at 1906-1915 (KKGKSKGNHT) is the Nuclear localization signal element. Tyr-1930 carries the post-translational modification O-(5'-phospho-RNA)-tyrosine. In terms of domain architecture, Peptidase C4 spans 2058–2276 (GKSMCRGLRN…IAWGGMSLKE (219 aa)). Active-site for nuclear inclusion protein A activity residues include His-2103, Asp-2138, and Cys-2208. The 125-residue stretch at 2545–2669 (WRYCHADGSQ…AVQPEHEGIL (125 aa)) folds into the RdRp catalytic domain. Residues 2838–2851 (LKEKEKEKHKKTEE) show a composition bias toward basic and acidic residues. The tract at residues 2838-2869 (LKEKEKEKHKKTEEGTSEGTSQTKEPDVDTGS) is disordered. The residue at position 3082 (Thr-3082) is a Phosphothreonine.

Belongs to the potyviridae genome polyprotein family. Interacts with host eIF4E protein (via cap-binding region); this interaction mediates the translation of the VPg-viral RNA conjugates. Part of a complex that comprises VPg, RNA, host EIF4E and EIF4G; this interaction mediates the translation of the VPg-viral RNA conjugates. Post-translationally, VPg is uridylylated by the polymerase and is covalently attached to the 5'-end of the genomic RNA. This uridylylated form acts as a nucleotide-peptide primer for the polymerase. Potyviral RNA is expressed as two polyproteins which undergo post-translational proteolytic processing. Genome polyprotein is processed by NIa-pro, P1 and HC-pro proteinases resulting in the production of at least ten individual proteins. P3N-PIPO polyprotein is cleaved by P1 and HC-pro proteinases resulting in the production of three individual proteins. The P1 proteinase and the HC-pro cleave only their respective C-termini autocatalytically. 6K1 is essential for proper proteolytic separation of P3 from CI.

It localises to the host cytoplasmic vesicle. Its subcellular location is the host nucleus. The protein resides in the virion. It catalyses the reaction RNA(n) + a ribonucleoside 5'-triphosphate = RNA(n+1) + diphosphate. It carries out the reaction Hydrolyzes glutaminyl bonds, and activity is further restricted by preferences for the amino acids in P6 - P1' that vary with the species of potyvirus, e.g. Glu-Xaa-Xaa-Tyr-Xaa-Gln-|-(Ser or Gly) for the enzyme from tobacco etch virus. The natural substrate is the viral polyprotein, but other proteins and oligopeptides containing the appropriate consensus sequence are also cleaved.. The enzyme catalyses Hydrolyzes a Gly-|-Gly bond at its own C-terminus, commonly in the sequence -Tyr-Xaa-Val-Gly-|-Gly, in the processing of the potyviral polyprotein.. Required for aphid transmission and also has proteolytic activity. Only cleaves a Gly-Gly dipeptide at its own C-terminus. Interacts with virions and aphid stylets. Acts as a suppressor of RNA-mediated gene silencing, also known as post-transcriptional gene silencing (PTGS), a mechanism of plant viral defense that limits the accumulation of viral RNAs. May have RNA-binding activity. Functionally, has helicase activity. It may be involved in replication. In terms of biological role, indispensable for virus replication. Reduces the abundance of host transcripts related to jasmonic acid biosynthesis therefore altering the host defenses. In order to increase its own stability, decreases host protein degradation pathways. Its function is as follows. Indispensable for virus replication. Mediates the cap-independent, EIF4E-dependent translation of viral genomic RNAs. Binds to the cap-binding site of host EIF4E and thus interferes with the host EIF4E-dependent mRNA export and translation. VPg-RNA directly binds EIF4E and is a template for transcription. Also forms trimeric complexes with EIF4E-EIF4G, which are templates for translation. Functionally, has RNA-binding and proteolytic activities. In terms of biological role, an RNA-dependent RNA polymerase that plays an essential role in the virus replication. Its function is as follows. Involved in aphid transmission, cell-to-cell and systemis movement, encapsidation of the viral RNA and in the regulation of viral RNA amplification. This is Genome polyprotein from Peanut mottle virus (strain M).